The primary structure comprises 451 residues: Trigger factor (451 aa).

Positions 165–250 (DDKLTIDFEG…LHQIQVREAL (86 aa)) constitute a PPIase FKBP-type domain.

The protein belongs to the FKBP-type PPIase family. Tig subfamily.

Its subcellular location is the cytoplasm. It catalyses the reaction [protein]-peptidylproline (omega=180) = [protein]-peptidylproline (omega=0). Its function is as follows. Involved in protein export. Acts as a chaperone by maintaining the newly synthesized protein in an open conformation. Functions as a peptidyl-prolyl cis-trans isomerase. The protein is Trigger factor of Helicobacter pylori (strain P12).